The following is a 129-amino-acid chain: Glycine cleavage system H protein (129 aa).

Residues 23 to 104 form the Lipoyl-binding domain; that stretch reads TVTVGITQHA…SYSAWLFKLK (82 aa). The residue at position 64 (K64) is an N6-lipoyllysine.

This sequence belongs to the GcvH family. In terms of assembly, the glycine cleavage system is composed of four proteins: P, T, L and H. (R)-lipoate serves as cofactor.

Functionally, the glycine cleavage system catalyzes the degradation of glycine. The H protein shuttles the methylamine group of glycine from the P protein to the T protein. This chain is Glycine cleavage system H protein, found in Nitrosomonas eutropha (strain DSM 101675 / C91 / Nm57).